Consider the following 802-residue polypeptide: E3 ubiquitin-protein ligase UHRF2 (802 aa).

A Ubiquitin-like domain is found at 1 to 78; sequence MWIQVRTIDG…IQLLVRPDPD (78 aa). Disordered regions lie at residues 80 to 116 and 153 to 197; these read LPGTSTQIEAKPCSNSPPKVKKAPRVGPSNQPSTSAR and RASD…STSN. Polar residues-rich tracts occupy residues 82-96, 153-177, and 188-197; these read GTSTQIEAKPCSNSP, RASDGQSRGKTPLKNGSSCKRTNGN, and KLDSVPSTSN. Residues 117-311 are required for interaction with histone H3; sequence ARLIDPGFGI…VDEIFKIERP (195 aa). The tract at residues 194 to 288 is interaction with PCNP; sequence STSNSDCVAA…KELRVKIFLG (95 aa). The segment at 344-395 adopts a PHD-type zinc-finger fold; it reads SCSCRVCGGKHEPNMQLLCDECNVAYHIYCLNPPLDKVPEEEYWYCPSCKTD. A methyl-CpG binding and interaction with HDAC1 region spans residues 414–644; it reads KMPSASTESR…LQYPAGYPSD (231 aa). In terms of domain architecture, YDG spans 448-612; the sequence is GPIPGIPVGS…FLVWRYLLRR (165 aa). The segment at 640 to 674 is disordered; it reads GYPSDKEGKKPKGQSKKQPSGTTKRPISDDDCPSA. Ser-667 is subject to Phosphoserine. An RING-type zinc finger spans residues 733 to 772; sequence CVCCQELVYQPVTTECFHNVCKDCLQRSFKAQVFSCPACR.

As to quaternary structure, homodimer; disulfide-linked. Binds methylated CpG containing oligonucleotides. Interacts with H3; the interaction has a preference for the 'Lys-9' trimethylated form of H3 (H3K9me3). Interacts with PCNP. Interacts with HDAC1. Interacts directly with CCNE1; the interaction ubiquitinates CCNE1 and appears independent of CCNE1 phosphorylation. Interacts with CCND1; the interaction ubiquitinates CCND1 and appears independent of CCND1 phosphorylation. Interacts with p53/TP53 and RB1. Interacts with UBE2I. Interacts with ZNF618. Interacts with UHRF1. Interacts with FANCD2. Interacts with ATR. Interacts with PCNA. In terms of processing, may be autoubiquitinated; which may lead to proteasomal degradation. Post-translationally, phosphorylated. Phosphorylation may be mediated by CDK2. Autosumoylated.

It localises to the nucleus. The protein resides in the chromosome. The catalysed reaction is S-ubiquitinyl-[E2 ubiquitin-conjugating enzyme]-L-cysteine + [acceptor protein]-L-lysine = [E2 ubiquitin-conjugating enzyme]-L-cysteine + N(6)-ubiquitinyl-[acceptor protein]-L-lysine.. It participates in protein modification; protein ubiquitination. E3 ligase activity is robustly activated by 5-hydroxymethylcytosine. E3 ubiquitin ligase that plays important roles in DNA methylation, histone modifications, cell cycle and DNA repair. Acts as a specific reader for 5-hydroxymethylcytosine (5hmC) and thereby recruits various substrates to these sites to ubiquitinate them. This activity also allows the maintenance of 5mC levels at specific genomic loci and regulates neuron-related gene expression. Participates in cell cycle regulation by ubiquitinating cyclins CCND1 and CCNE1 and thereby inducing G1 arrest. Also ubiquitinates PCNP leading to its degradation by the proteasome. Plays an active role in DNA damage repair by ubiquitinating p21/CDKN1A leading to its proteasomal degradation. Also promotes DNA repair by acting as an interstrand cross-links (ICLs) sensor. Mechanistically, cooperates with UHRF1 to ensure recruitment of FANCD2 to ICLs, leading to FANCD2 monoubiquitination and subsequent activation. Contributes to UV-induced DNA damage response by physically interacting with ATR in response to irradiation, thereby promoting ATR activation. The chain is E3 ubiquitin-protein ligase UHRF2 (UHRF2) from Homo sapiens (Human).